A 340-amino-acid chain; its full sequence is Tartrate-resistant acid phosphatase type 5 (340 aa).

The first 20 residues, 1-20 (MDTWTVLLILQASLVLPGAV), serve as a signal peptide directing secretion. Asp-41, Asp-79, Tyr-82, and Asn-118 together coordinate Fe cation. 2 N-linked (GlcNAc...) asparagine glycosylation sites follow: Asn-124 and Asn-155. A disulfide bridge links Cys-169 with Cys-227. Residues His-213, His-248, and His-250 each contribute to the Fe cation site.

Requires Fe cation as cofactor.

The protein localises to the secreted. It catalyses the reaction a phosphate monoester + H2O = an alcohol + phosphate. Functionally, uteroferrin is a phosphoprotein phosphatase, synthesized in response to progesterone. It appears to function in transplacental transport of iron in pig. This chain is Tartrate-resistant acid phosphatase type 5 (ACP5), found in Sus scrofa (Pig).